A 100-amino-acid chain; its full sequence is uncharacterized protein (100 aa).

This is an uncharacterized protein from Acanthamoeba polyphaga mimivirus (APMV).